The chain runs to 121 residues: Large ribosomal subunit protein bL12 (121 aa).

It belongs to the bacterial ribosomal protein bL12 family. In terms of assembly, homodimer. Part of the ribosomal stalk of the 50S ribosomal subunit. Forms a multimeric L10(L12)X complex, where L10 forms an elongated spine to which 2 to 4 L12 dimers bind in a sequential fashion. Binds GTP-bound translation factors.

Forms part of the ribosomal stalk which helps the ribosome interact with GTP-bound translation factors. Is thus essential for accurate translation. The sequence is that of Large ribosomal subunit protein bL12 from Streptococcus agalactiae serotype V (strain ATCC BAA-611 / 2603 V/R).